The chain runs to 293 residues: Homoserine kinase (293 aa).

83 to 93 (PITRGMGSSSA) is an ATP binding site.

It belongs to the GHMP kinase family. Homoserine kinase subfamily.

It localises to the cytoplasm. It carries out the reaction L-homoserine + ATP = O-phospho-L-homoserine + ADP + H(+). Its pathway is amino-acid biosynthesis; L-threonine biosynthesis; L-threonine from L-aspartate: step 4/5. In terms of biological role, catalyzes the ATP-dependent phosphorylation of L-homoserine to L-homoserine phosphate. The chain is Homoserine kinase from Helicobacter pylori (strain J99 / ATCC 700824) (Campylobacter pylori J99).